Here is a 148-residue protein sequence, read N- to C-terminus: Ubiquitin-conjugating enzyme E2 30 (148 aa).

The region spanning 1 to 147 (MASKRINKEL…AQSWTQKYAM (147 aa)) is the UBC core domain. The active-site Glycyl thioester intermediate is Cys-85.

This sequence belongs to the ubiquitin-conjugating enzyme family. As to quaternary structure, interacts with RGLG3 and RGLG4. In terms of tissue distribution, ubiquitously expressed at very low levels.

It catalyses the reaction S-ubiquitinyl-[E1 ubiquitin-activating enzyme]-L-cysteine + [E2 ubiquitin-conjugating enzyme]-L-cysteine = [E1 ubiquitin-activating enzyme]-L-cysteine + S-ubiquitinyl-[E2 ubiquitin-conjugating enzyme]-L-cysteine.. It functions in the pathway protein modification; protein ubiquitination. Accepts the ubiquitin from the E1 complex and catalyzes its covalent attachment to other proteins. In Arabidopsis thaliana (Mouse-ear cress), this protein is Ubiquitin-conjugating enzyme E2 30 (UBC30).